The following is a 213-amino-acid chain: Redox-sensing transcriptional repressor Rex (213 aa).

Residues 18-57 (LYYRIFKRFHAEKIERANSKQIAEAIGIDSATVRRDFSYF) constitute a DNA-binding region (H-T-H motif). Residue 92–97 (GIGNMG) coordinates NAD(+).

It belongs to the transcriptional regulatory Rex family. In terms of assembly, homodimer.

The protein resides in the cytoplasm. Functionally, modulates transcription in response to changes in cellular NADH/NAD(+) redox state. Binds to the promoter of the aldehyde-alcohol dehydrogenase adhE gene. Functions as a redox-dependent repressor of adhE expression. In Streptococcus pneumoniae serotype 19F (strain G54), this protein is Redox-sensing transcriptional repressor Rex.